The chain runs to 280 residues: 2-dehydro-3-deoxyphosphooctonate aldolase (280 aa).

The protein belongs to the KdsA family.

The protein resides in the cytoplasm. It catalyses the reaction D-arabinose 5-phosphate + phosphoenolpyruvate + H2O = 3-deoxy-alpha-D-manno-2-octulosonate-8-phosphate + phosphate. The protein operates within carbohydrate biosynthesis; 3-deoxy-D-manno-octulosonate biosynthesis; 3-deoxy-D-manno-octulosonate from D-ribulose 5-phosphate: step 2/3. Its pathway is bacterial outer membrane biogenesis; lipopolysaccharide biosynthesis. The polypeptide is 2-dehydro-3-deoxyphosphooctonate aldolase (Desulfotalea psychrophila (strain LSv54 / DSM 12343)).